A 153-amino-acid chain; its full sequence is Probable inactive ribonuclease-like protein 13 (153 aa).

An N-terminal signal peptide occupies residues 1–22 (MAPDVAWLLVLPLVFRPTLVTG).

The protein belongs to the pancreatic ribonuclease family.

It localises to the secreted. Functionally, does not exhibit any ribonuclease activity. This Mus musculus (Mouse) protein is Probable inactive ribonuclease-like protein 13 (Rnase13).